The primary structure comprises 463 residues: D(5)-like dopamine receptor (463 aa).

The Extracellular portion of the chain corresponds to methionine 1–arginine 39. Asparagine 6 is a glycosylation site (N-linked (GlcNAc...) asparagine). A helical membrane pass occupies residues alanine 40–isoleucine 65. At lysine 66–asparagine 76 the chain is on the cytoplasmic side. A helical membrane pass occupies residues alanine 77 to alanine 103. The Extracellular portion of the chain corresponds to glycine 104–cysteine 112. Cysteine 112 and cysteine 194 are joined by a disulfide. The chain crosses the membrane as a helical span at residues aspartate 113–methionine 135. The Cytoplasmic segment spans residues aspartate 136–arginine 154. The helical transmembrane segment at phenylalanine 155–histidine 180 threads the bilayer. At arginine 181–leucine 198 the chain is on the extracellular side. A helical transmembrane segment spans residues asparagine 199–threonine 223. At arginine 224–leucine 273 the chain is on the cytoplasmic side. Residues lysine 274–aspartate 301 traverse the membrane as a helical segment. Residues valine 302–threonine 315 lie on the Extracellular side of the membrane. Residues phenylalanine 316–asparagine 337 form a helical membrane-spanning segment. Residues alanine 338 to leucine 463 are Cytoplasmic-facing.

The protein belongs to the G-protein coupled receptor 1 family.

It is found in the cell membrane. Its function is as follows. Receptor for dopamine. The sequence is that of D(5)-like dopamine receptor (dl) from Takifugu rubripes (Japanese pufferfish).